Here is a 513-residue protein sequence, read N- to C-terminus: Lysine--tRNA ligase (513 aa).

Mg(2+)-binding residues include E423 and E430.

Belongs to the class-II aminoacyl-tRNA synthetase family. Homodimer. It depends on Mg(2+) as a cofactor.

The protein localises to the cytoplasm. The catalysed reaction is tRNA(Lys) + L-lysine + ATP = L-lysyl-tRNA(Lys) + AMP + diphosphate. The polypeptide is Lysine--tRNA ligase (Anaeromyxobacter dehalogenans (strain 2CP-1 / ATCC BAA-258)).